The chain runs to 302 residues: 4-hydroxy-tetrahydrodipicolinate synthase (302 aa).

Thr44 provides a ligand contact to pyruvate. Residue Tyr132 is the Proton donor/acceptor of the active site. The Schiff-base intermediate with substrate role is filled by Lys160. Residue Val202 coordinates pyruvate.

It belongs to the DapA family. Homotetramer; dimer of dimers.

The protein localises to the cytoplasm. The catalysed reaction is L-aspartate 4-semialdehyde + pyruvate = (2S,4S)-4-hydroxy-2,3,4,5-tetrahydrodipicolinate + H2O + H(+). It functions in the pathway amino-acid biosynthesis; L-lysine biosynthesis via DAP pathway; (S)-tetrahydrodipicolinate from L-aspartate: step 3/4. Catalyzes the condensation of (S)-aspartate-beta-semialdehyde [(S)-ASA] and pyruvate to 4-hydroxy-tetrahydrodipicolinate (HTPA). In Thermomicrobium roseum (strain ATCC 27502 / DSM 5159 / P-2), this protein is 4-hydroxy-tetrahydrodipicolinate synthase.